The sequence spans 111 residues: Nucleoid-associated protein Teth39_2199 (111 aa).

It belongs to the YbaB/EbfC family. In terms of assembly, homodimer.

It is found in the cytoplasm. Its subcellular location is the nucleoid. Its function is as follows. Binds to DNA and alters its conformation. May be involved in regulation of gene expression, nucleoid organization and DNA protection. The chain is Nucleoid-associated protein Teth39_2199 from Thermoanaerobacter pseudethanolicus (strain ATCC 33223 / 39E) (Clostridium thermohydrosulfuricum).